Reading from the N-terminus, the 398-residue chain is MVDLVKRFLQLEAASGIILFFTAVLALILANSPWSEIYFSFLDIPVQFRVGSLDVHKPLLLWINDGLMAIFFLLVGMEIKREALEGSLSSMRQAGLPVIAAIGGMIVPAAMFSFIINDAPQFMAGWAIPMATDIAFALGVLSLLSGRVPLSLKVFLLALAIIDDLGAIMVIALFYTAELHTIPLLFAVALSAMLLMLNRSRVMLLTPYLIVGALLWLAVLKSGVHATIAGVILGFAIPHIRGATHTPLRQLEHQLHPWSSYFILPFFAFANAGLSFSGLSWTDLGSGLPLAIIVGLFIGKPLGVMLVSWLAVKAKLAALPENVGWQQLFGLSVLCGIGFTMSIFIGGLAFGTASEAFASSRLGILFGSLIAAVFGYILLRNATRTCQRKEQKRVSSQL.

12 consecutive transmembrane segments (helical) span residues 8–28 (FLQLEAASGIILFFTAVLALI), 59–79 (LLLWINDGLMAIFFLLVGMEI), 96–116 (LPVIAAIGGMIVPAAMFSFII), 124–144 (AGWAIPMATDIAFALGVLSLL), 154–174 (VFLLALAIIDDLGAIMVIALF), 177–197 (AELHTIPLLFAVALSAMLLML), 202–222 (VMLLTPYLIVGALLWLAVLKS), 223–243 (GVHATIAGVILGFAIPHIRGA), 261–281 (YFILPFFAFANAGLSFSGLSW), 292–312 (IIVGLFIGKPLGVMLVSWLAV), 328–348 (LFGLSVLCGIGFTMSIFIGGL), and 362–382 (LGILFGSLIAAVFGYILLRNA).

It belongs to the NhaA Na(+)/H(+) (TC 2.A.33) antiporter family.

The protein localises to the cell inner membrane. It catalyses the reaction Na(+)(in) + 2 H(+)(out) = Na(+)(out) + 2 H(+)(in). Functionally, na(+)/H(+) antiporter that extrudes sodium in exchange for external protons. In Tolumonas auensis (strain DSM 9187 / NBRC 110442 / TA 4), this protein is Na(+)/H(+) antiporter NhaA.